A 56-amino-acid chain; its full sequence is Large ribosomal subunit protein bL32 (56 aa).

Positions 1–20 (MAVPKRRTSRSNTRSRRAQW) are enriched in basic residues. The tract at residues 1–26 (MAVPKRRTSRSNTRSRRAQWKAKAPA) is disordered.

Belongs to the bacterial ribosomal protein bL32 family.

This chain is Large ribosomal subunit protein bL32, found in Parafrankia sp. (strain EAN1pec).